Consider the following 308-residue polypeptide: Ribonuclease HIII (308 aa).

Residues 93–308 (MSVLGSDETG…ANTEKARKMI (216 aa)) enclose the RNase H type-2 domain. A divalent metal cation is bound by residues D99, E100, and D204.

Belongs to the RNase HII family. RnhC subfamily. Mn(2+) is required as a cofactor. Mg(2+) serves as cofactor.

Its subcellular location is the cytoplasm. It carries out the reaction Endonucleolytic cleavage to 5'-phosphomonoester.. Functionally, endonuclease that specifically degrades the RNA of RNA-DNA hybrids. This Lysinibacillus sphaericus (strain C3-41) protein is Ribonuclease HIII.